The following is a 134-amino-acid chain: Arginine decarboxylase proenzyme (134 aa).

Ser-82 (schiff-base intermediate with substrate; via pyruvic acid) is an active-site residue. The residue at position 82 (Ser-82) is a Pyruvic acid (Ser); by autocatalysis. His-87 functions as the Proton acceptor; for processing activity in the catalytic mechanism. The Proton donor; for catalytic activity role is filled by Cys-102.

The protein belongs to the prokaryotic AdoMetDC family. Type 1 subfamily. As to quaternary structure, heterooctamer of four alpha and four beta chains arranged as a tetramer of alpha/beta heterodimers. The cofactor is pyruvate. Post-translationally, is synthesized initially as an inactive proenzyme. Formation of the active enzyme involves a self-maturation process in which the active site pyruvoyl group is generated from an internal serine residue via an autocatalytic post-translational modification. Two non-identical subunits are generated from the proenzyme in this reaction, and the pyruvate is formed at the N-terminus of the alpha chain, which is derived from the carboxyl end of the proenzyme. The post-translation cleavage follows an unusual pathway, termed non-hydrolytic serinolysis, in which the side chain hydroxyl group of the serine supplies its oxygen atom to form the C-terminus of the beta chain, while the remainder of the serine residue undergoes an oxidative deamination to produce ammonia and the pyruvoyl group blocking the N-terminus of the alpha chain.

It carries out the reaction L-arginine + H(+) = agmatine + CO2. It participates in amine and polyamine biosynthesis; agmatine biosynthesis; agmatine from L-arginine: step 1/1. Its function is as follows. Specifically catalyzes the decarboxylation of L-arginine to agmatine. Has no S-adenosylmethionine decarboxylase (AdoMetDC) activity. The protein is Arginine decarboxylase proenzyme of Caldivirga maquilingensis (strain ATCC 700844 / DSM 13496 / JCM 10307 / IC-167).